A 231-amino-acid polypeptide reads, in one-letter code: Tol-Pal system protein TolQ (231 aa).

Transmembrane regions (helical) follow at residues 20–40, 134–154, and 176–196; these read IVVQLVMLTLVAASVTSWIMI, FLATVGSTSPYVGLFGTVWGI, and IAEALIATAIGLFAAIPAVIA.

The protein belongs to the ExbB/TolQ family. As to quaternary structure, the Tol-Pal system is composed of five core proteins: the inner membrane proteins TolA, TolQ and TolR, the periplasmic protein TolB and the outer membrane protein Pal. They form a network linking the inner and outer membranes and the peptidoglycan layer.

It is found in the cell inner membrane. Its function is as follows. Part of the Tol-Pal system, which plays a role in outer membrane invagination during cell division and is important for maintaining outer membrane integrity. The sequence is that of Tol-Pal system protein TolQ from Pseudomonas aeruginosa (strain ATCC 15692 / DSM 22644 / CIP 104116 / JCM 14847 / LMG 12228 / 1C / PRS 101 / PAO1).